A 541-amino-acid polypeptide reads, in one-letter code: Nectin 1b (541 aa).

The first 21 residues, 1–21, serve as a signal peptide directing secretion; sequence MDKQESFFVGHKSHRCSQNRS. The Extracellular portion of the chain corresponds to 22–396; sequence VSQIHQRTSR…PAELHSSGAA (375 aa). 7 N-linked (GlcNAc...) asparagine glycosylation sites follow: Asn51, Asn105, Asn180, Asn242, Asn326, Asn337, and Asn372. One can recognise an Ig-like V-type domain in the interval 77 to 182; that stretch reads GDTVELKCLF…GNRENMVNLT (106 aa). Cys84 and Cys165 form a disulfide bridge. Ig-like C2-type domains follow at residues 187–282 and 287–374; these read PVTK…VILN and PEVK…VNVT. 2 cysteine pairs are disulfide-bonded: Cys212–Cys266 and Cys309–Cys356. A helical transmembrane segment spans residues 397 to 417; that stretch reads IGGAVGGVALLVAAIALLVFF. The Cytoplasmic segment spans residues 418–541; the sequence is LRRRQRTFKG…SVISKKEWYV (124 aa). The interval 440-507 is disordered; the sequence is YSKAGGMPAH…VDEGESRDYD (68 aa). Residues 479-493 show a composition bias toward basic and acidic residues; sequence SGDRDFDGNSEDLKR.

The protein belongs to the nectin family. In terms of assembly, cis- and trans-homodimer. Can form trans-heterodimers. In terms of tissue distribution, expressed in the developing eye and nervous system.

The protein localises to the cell membrane. Its subcellular location is the cell junction. The protein resides in the adherens junction. Functionally, cell adhesion molecule that promotes cell-cell contacts and plays important roles in the development of the nervous system. Acts by forming homophilic or heterophilic trans-dimers. This chain is Nectin 1b, found in Danio rerio (Zebrafish).